The following is a 71-amino-acid chain: Prokaryotic ubiquitin-like protein Pup (71 aa).

The span at 1–18 (MPEKDTGGQHRATRRTEE) shows a compositional bias: basic and acidic residues. Residues 1-36 (MPEKDTGGQHRATRRTEEHDETIDEATATSDVQERR) are disordered. An ARC ATPase binding region spans residues 27-65 (TATSDVQERREKLDADVDAILDEIDDVLEENAEEFVRSY). Positions 30–59 (SDVQERREKLDADVDAILDEIDDVLEENAE) form a coiled coil. Glutamate 71 participates in a covalent cross-link: Isoglutamyl lysine isopeptide (Glu-Lys) (interchain with K-? in acceptor proteins).

This sequence belongs to the prokaryotic ubiquitin-like protein family. In terms of assembly, strongly interacts with the proteasome-associated ATPase ARC through a hydrophobic interface; the interacting region of Pup lies in its C-terminal half. There is one Pup binding site per ARC hexamer ring.

Its pathway is protein degradation; proteasomal Pup-dependent pathway. Its function is as follows. Protein modifier that is covalently attached to lysine residues of substrate proteins, thereby targeting them for proteasomal degradation. The tagging system is termed pupylation. This is Prokaryotic ubiquitin-like protein Pup from Acidothermus cellulolyticus (strain ATCC 43068 / DSM 8971 / 11B).